A 316-amino-acid chain; its full sequence is Methionyl-tRNA formyltransferase (316 aa).

A (6S)-5,6,7,8-tetrahydrofolate-binding site is contributed by 112–115 (GLLP).

It belongs to the Fmt family.

It carries out the reaction L-methionyl-tRNA(fMet) + (6R)-10-formyltetrahydrofolate = N-formyl-L-methionyl-tRNA(fMet) + (6S)-5,6,7,8-tetrahydrofolate + H(+). Functionally, attaches a formyl group to the free amino group of methionyl-tRNA(fMet). The formyl group appears to play a dual role in the initiator identity of N-formylmethionyl-tRNA by promoting its recognition by IF2 and preventing the misappropriation of this tRNA by the elongation apparatus. This Chlamydia muridarum (strain MoPn / Nigg) protein is Methionyl-tRNA formyltransferase.